Here is a 119-residue protein sequence, read N- to C-terminus: MNARGMTLLEVMVALAVFAIAGLAVMKTASEHLSALNYLEEKTLATWVVENQLVQQKLEAKWPGDSWVEGGEQMAGQTWYWRYRGVATADNNFKALDMEVRTAPKAESPVAFIRTYISR.

The propeptide at 1 to 5 (MNARG) is leader sequence. M6 is modified (N-methylmethionine). The chain crosses the membrane as a helical span at residues 6-26 (MTLLEVMVALAVFAIAGLAVM).

Belongs to the GSP I family. As to quaternary structure, type II secretion is composed of four main components: the outer membrane complex, the inner membrane complex, the cytoplasmic secretion ATPase and the periplasm-spanning pseudopilus. Interacts with core component ExeG. Cleaved by prepilin peptidase. In terms of processing, methylated by prepilin peptidase at the amino group of the N-terminal methionine once the leader sequence is cleaved by prepilin peptidase.

Its subcellular location is the cell inner membrane. In terms of biological role, component of the type II secretion system required for the energy-dependent secretion of extracellular factors such as proteases and toxins from the periplasm. Part of the pseudopilus tip complex that is critical for the recognition and binding of secretion substrates. The polypeptide is Type II secretion system protein I (exeI) (Aeromonas hydrophila).